The chain runs to 125 residues: MHRKEPGARLEATRGAARPHKQGTKPMITRPSVSQLGEGKCPSSQHLQSLRHNKQHALTLTKARCCGECSTCFCTEEKSECQRHEETSPGSCNHQIMSASTISAFCATPRFKQLFKGTVEQMSQM.

Basic and acidic residues predominate over residues 1 to 12 (MHRKEPGARLEA). A disordered region spans residues 1–45 (MHRKEPGARLEATRGAARPHKQGTKPMITRPSVSQLGEGKCPSSQ).

Expressed in testes and ejaculated spermatozoa (at protein level).

The protein resides in the cytoplasm. It localises to the nucleus. It is found in the cell projection. Its subcellular location is the cilium. The protein localises to the flagellum. In terms of biological role, may play a role in the flagellum biology. The chain is Testis-specific protein LINC02914 from Homo sapiens (Human).